Consider the following 148-residue polypeptide: Ribosome maturation factor RimP (148 aa).

The protein belongs to the RimP family.

It is found in the cytoplasm. Functionally, required for maturation of 30S ribosomal subunits. The polypeptide is Ribosome maturation factor RimP (Nautilia profundicola (strain ATCC BAA-1463 / DSM 18972 / AmH)).